A 229-amino-acid chain; its full sequence is Lipoprotein-releasing system ATP-binding protein LolD (229 aa).

An ABC transporter domain is found at 7–229 (LQCINLTKSF…KNGQLFNNKN (223 aa)). 43–50 (GKSGSGKS) is a binding site for ATP.

Belongs to the ABC transporter superfamily. Lipoprotein translocase (TC 3.A.1.125) family. As to quaternary structure, the complex is composed of two ATP-binding proteins (LolD) and two transmembrane proteins (LolC and LolE).

It is found in the cell inner membrane. Its function is as follows. Part of the ABC transporter complex LolCDE involved in the translocation of mature outer membrane-directed lipoproteins, from the inner membrane to the periplasmic chaperone, LolA. Responsible for the formation of the LolA-lipoprotein complex in an ATP-dependent manner. This is Lipoprotein-releasing system ATP-binding protein LolD from Buchnera aphidicola subsp. Schizaphis graminum (strain Sg).